A 2300-amino-acid chain; its full sequence is Adenylate cyclase (2300 aa).

2 stretches are compositionally biased toward polar residues: residues 1–21 and 28–41; these read MTRN…SSIT and TPTS…TRPL. Disordered regions lie at residues 1-256, 272-593, and 631-652; these read MTRN…GSFL, GIRP…DLTR, and TKLF…MDED. 2 stretches are compositionally biased toward low complexity: residues 42–61 and 92–152; these read SPSL…VSRS and SSQS…QVSP. Polar residues predominate over residues 153–169; it reads TGGSRLTQSPTTPSNAS. A compositionally biased stretch (basic and acidic residues) spans 170-185; it reads IREHRMSELGGYRREM. Positions 204 to 221 are enriched in low complexity; the sequence is QQQPQQPQQQQQQQQQQQ. Residues 228-237 show a composition bias toward polar residues; the sequence is VSGTFSNLSQ. Residues 303-313 are compositionally biased toward low complexity; that stretch reads SIASITTTASS. Basic and acidic residues predominate over residues 333 to 344; sequence GDRDDWPGRDSS. Residues 345 to 357 show a composition bias toward polar residues; that stretch reads EISLPQPSHSGPM. Pro residues predominate over residues 410-421; it reads PSRPRTPVPAPE. Residues 455 to 469 are compositionally biased toward polar residues; that stretch reads DSSQNPPKTSSSARS. Over residues 484–501 the composition is skewed to basic and acidic residues; it reads KSNEDPRALKPSLSREDS. Residues 511 to 550 are compositionally biased toward polar residues; it reads NGSSSMMGTRSRAQSPAPSWTGTSRGLKANSISDGTSSPA. Basic residues predominate over residues 552–565; that stretch reads SHKKGILGRFRRHN. A compositionally biased stretch (low complexity) spans 631-643; the sequence is TKLFTSKKSSSAK. The 93-residue stretch at 749–841 folds into the Ras-associating domain; the sequence is SNYYIRVFRS…IDEIGREDNS (93 aa). 16 LRR repeats span residues 867-890, 892-914, 915-938, 939-961, 962-986, 988-1008, 1009-1031, 1033-1055, 1056-1079, 1081-1097, 1098-1119, 1120-1142, 1143-1165, 1166-1188, 1189-1211, and 1213-1234; these read NQKL…LYRK, AEIV…FIQA, CTAL…FATA, SKLT…ELSK, LTGL…GAYK, LRTL…ICEL, ETIV…LMKL, NLEK…VRDL, VSLR…DLPR, EILS…SGSF, ERLR…KAPV, PTLK…IDNL, MNLE…IGNL, KKLD…IGCL, TELR…IWWA, and KLEH…ASRA. The segment at 1228 to 1336 is disordered; sequence PKPASRAPQA…VITPSNGPRK (109 aa). The span at 1253 to 1263 shows a compositional bias: polar residues; the sequence is ANKNGLLSRTP. Low complexity predominate over residues 1313-1327; that stretch reads TSVVSRSTTQSSTGV. LRR repeat units lie at residues 1349–1369, 1373–1396, 1398–1420, 1422–1445, 1447–1469, and 1474–1497; these read SGSL…VFEE, LPEL…TIRS, PQLV…DFLE, HCLL…ISRA, KLQV…PYDW, and NRDL…YRQP. One can recognise a PPM-type phosphatase domain in the interval 1552-1828; sequence PYGMADTLGK…NKLLIMMIGV (277 aa). Positions 1847–1867 are disordered; that stretch reads FSMPQDDPSHVPPSGNKRRKV. In terms of domain architecture, Guanylate cyclase spans 1892–2029; that stretch reads SIVFTDIKNS…PMVNKASRIS (138 aa). The Mg(2+) site is built by aspartate 1897 and aspartate 1940. The tract at residues 2272–2300 is disordered; that stretch reads LDQAETDDATDNNSSGDVDTLDGSDTEQE. Acidic residues predominate over residues 2290 to 2300; the sequence is DTLDGSDTEQE.

It belongs to the adenylyl cyclase class-4/guanylyl cyclase family. Mg(2+) is required as a cofactor.

It catalyses the reaction ATP = 3',5'-cyclic AMP + diphosphate. In terms of biological role, plays essential roles in regulation of cellular metabolism by catalyzing the synthesis of a second messenger, cAMP. This is Adenylate cyclase (cr-1) from Neurospora crassa (strain ATCC 24698 / 74-OR23-1A / CBS 708.71 / DSM 1257 / FGSC 987).